A 712-amino-acid polypeptide reads, in one-letter code: MKVHCLSQSAQSPCFLLEYKNVKILLDCALEISSILHFLPKNLNYNNNNNNNNNNNNNNNNNNNNNNNNNSYSFKEKDKELNQFFKNINGTLYIDNGCSNIKYNCPQFEMIDDFSTIDMILISNYTNIYALPFITEYTNFQGKIYATEPTVQIGKLLLEELVQMDKQYSNSSINNNNNNNNLSDCWQNIEILEKLNVHNVGMENENLYRDSYRWKDLYKKIDIEKSFEKIQSIRFNESIKHYGFECIPSSSGYGLGSANWVIESKGFERVVYISDSSLSLSRYPTPFQLSPIDNPDVLILSKINHYPNNPPDQMLSELCSNIGSTLQQGGTVLIPSYSCGIILDLFEHLADYLNKVGLPYVPIYFVSSVSKAVLSYADIYSEWLNKSKQERAFMPETPFLHQDLMRKGQFQAYQHVHSNFQANDPCIIFTGHPSCRIGDITTLIKLYDNPKNSILLIEPDFDFKSTVLPFSKQISRIQFLPIDPRINFNEANLLISKLSPKHLIIPRIYKNYVKNKHSNGNFGIVTTILPLDTIKIQNNQNFESGFIDKELAQTIQTKVLDKSSQLKNNTTTTTTTTINNQQPIHVAEISGVLSMSDHELIISPPNISDSNKIIHIKEKFIWGTLSIENIIKAINSTKQFKNNGDSIEYFEINENYYLIKISSKNKTNNNNNSDQVTNIHLSPQNVNIETSCETTRRLISDIVLLNCNGFYV.

Positions 47–70 (NNNNNNNNNNNNNNNNNNNNNNNN) are enriched in low complexity. The interval 47–73 (NNNNNNNNNNNNNNNNNNNNNNNNSYS) is disordered.

It belongs to the metallo-beta-lactamase superfamily. RNA-metabolizing metallo-beta-lactamase-like family. INTS9 subfamily. In terms of assembly, component of the Integrator complex. The core complex associates with protein phosphatase 2A subunits, to form the Integrator-PP2A (INTAC) complex.

It is found in the nucleus. The protein localises to the cytoplasm. Its function is as follows. Component of the integrator complex, a multiprotein complex that terminates RNA polymerase II (Pol II) transcription in the promoter-proximal region of genes. The integrator complex provides a quality checkpoint during transcription elongation by driving premature transcription termination of transcripts that are unfavorably configured for transcriptional elongation: the complex terminates transcription by (1) catalyzing dephosphorylation of the C-terminal domain (CTD) of Pol II subunit polr2a, (2) degrading the exiting nascent RNA transcript via endonuclease activity and (3) promoting the release of Pol II from bound DNA. The integrator complex is also involved in terminating the synthesis of non-coding Pol II transcripts, such as enhancer RNAs (eRNAs), small nuclear RNAs (snRNAs), telomerase RNAs and long non-coding RNAs (lncRNAs). This Dictyostelium discoideum (Social amoeba) protein is Integrator complex subunit 9 homolog (ints9).